Reading from the N-terminus, the 447-residue chain is Asparagine--tRNA ligase (447 aa).

Belongs to the class-II aminoacyl-tRNA synthetase family. In terms of assembly, homodimer.

It localises to the cytoplasm. The enzyme catalyses tRNA(Asn) + L-asparagine + ATP = L-asparaginyl-tRNA(Asn) + AMP + diphosphate + H(+). The protein is Asparagine--tRNA ligase of Lactococcus lactis subsp. cremoris (strain MG1363).